The following is a 177-amino-acid chain: Nucleoside triphosphate/diphosphate phosphatase (177 aa).

The Proton donor role is filled by arginine 23. Residues asparagine 87, aspartate 103, aspartate 105, aspartate 107, aspartate 120, and glutamate 123 each contribute to the Mg(2+) site.

The protein belongs to the Ntdp family. It depends on Mg(2+) as a cofactor.

The catalysed reaction is a ribonucleoside 5'-triphosphate + H2O = a ribonucleoside 5'-diphosphate + phosphate + H(+). It carries out the reaction a ribonucleoside 5'-diphosphate + H2O = a ribonucleoside 5'-phosphate + phosphate + H(+). In terms of biological role, has nucleoside phosphatase activity towards nucleoside triphosphates and nucleoside diphosphates. The polypeptide is Nucleoside triphosphate/diphosphate phosphatase (Streptococcus suis (strain 98HAH33)).